The sequence spans 218 residues: Eukaryotic translation initiation factor 4E-1 (218 aa).

The segment at 1–39 (MAEETDTRPASAGSRGRPAPEDDDREEGEITDLACAPSP) is disordered. A compositionally biased stretch (acidic residues) spans 21 to 30 (EDDDREEGEI). EIF4G-binding regions lie at residues 43–46 (HPLE) and 53–89 (FDNPQSKSKQAAWGSSIRPIHTFSTVEEFWGLYNNIN). Residues 61–66 (KQAAWG), K93, and 111–112 (WE) each bind mRNA. The cysteines at positions 116 and 154 are disulfide-linked. Positions 137–146 (HTLLAMIGEQ) are EIF4G-binding. Residues 161–166 (RGKQER) and 206–210 (KKMDK) contribute to the mRNA site.

The protein belongs to the eukaryotic initiation factor 4E family. EIF4F is a multi-subunit complex, the composition of which varies with external and internal environmental conditions. It is composed of at least EIF4A, EIF4E and EIF4G. EIF4E is also known to interact with other partners. In higher plants two isoforms of EIF4F have been identified, named isoform EIF4F and isoform EIF(iso)4F. Isoform EIF4F has subunits p220 and p26, whereas isoform EIF(iso)4F has subunits p82 and p28. Post-translationally, according to the redox status, the Cys-116-Cys-154 disulfide bridge may have a role in regulating protein function by affecting its ability to bind capped mRNA. Phosphorylated upon oxygen deprivation.

It is found in the nucleus. The protein resides in the cytoplasm. Its function is as follows. Component of the protein complex eIF4F, which is involved in the recognition of the mRNA cap, ATP-dependent unwinding of 5'-terminal secondary structure and recruitment of mRNA to the ribosome. Recognizes and binds the 7-methylguanosine-containing mRNA cap during an early step in the initiation of protein synthesis and facilitates ribosome binding by inducing the unwinding of the mRNAs secondary structures. This Zea mays (Maize) protein is Eukaryotic translation initiation factor 4E-1.